A 388-amino-acid polypeptide reads, in one-letter code: Chorismate synthase (388 aa).

Arginine 39 and arginine 45 together coordinate NADP(+). Residues arginine 130–serine 132, asparagine 251–alanine 252, glycine 296, lysine 311–threonine 315, and arginine 337 each bind FMN.

This sequence belongs to the chorismate synthase family. Homotetramer. It depends on FMNH2 as a cofactor.

It carries out the reaction 5-O-(1-carboxyvinyl)-3-phosphoshikimate = chorismate + phosphate. It participates in metabolic intermediate biosynthesis; chorismate biosynthesis; chorismate from D-erythrose 4-phosphate and phosphoenolpyruvate: step 7/7. Catalyzes the anti-1,4-elimination of the C-3 phosphate and the C-6 proR hydrogen from 5-enolpyruvylshikimate-3-phosphate (EPSP) to yield chorismate, which is the branch point compound that serves as the starting substrate for the three terminal pathways of aromatic amino acid biosynthesis. This reaction introduces a second double bond into the aromatic ring system. In Lactococcus lactis subsp. cremoris (strain SK11), this protein is Chorismate synthase.